Here is a 98-residue protein sequence, read N- to C-terminus: Aspartyl/glutamyl-tRNA(Asn/Gln) amidotransferase subunit C (98 aa).

Residues 70–98 (PSLTPEQALSGAPAQEQQRFKVPQILGED) are disordered.

The protein belongs to the GatC family. As to quaternary structure, heterotrimer of A, B and C subunits.

The enzyme catalyses L-glutamyl-tRNA(Gln) + L-glutamine + ATP + H2O = L-glutaminyl-tRNA(Gln) + L-glutamate + ADP + phosphate + H(+). It carries out the reaction L-aspartyl-tRNA(Asn) + L-glutamine + ATP + H2O = L-asparaginyl-tRNA(Asn) + L-glutamate + ADP + phosphate + 2 H(+). Its function is as follows. Allows the formation of correctly charged Asn-tRNA(Asn) or Gln-tRNA(Gln) through the transamidation of misacylated Asp-tRNA(Asn) or Glu-tRNA(Gln) in organisms which lack either or both of asparaginyl-tRNA or glutaminyl-tRNA synthetases. The reaction takes place in the presence of glutamine and ATP through an activated phospho-Asp-tRNA(Asn) or phospho-Glu-tRNA(Gln). This chain is Aspartyl/glutamyl-tRNA(Asn/Gln) amidotransferase subunit C, found in Streptomyces avermitilis (strain ATCC 31267 / DSM 46492 / JCM 5070 / NBRC 14893 / NCIMB 12804 / NRRL 8165 / MA-4680).